Consider the following 536-residue polypeptide: Formate--tetrahydrofolate ligase (536 aa).

Position 51–58 (51–58 (TAAGEGKT)) interacts with ATP.

It belongs to the formate--tetrahydrofolate ligase family.

It carries out the reaction (6S)-5,6,7,8-tetrahydrofolate + formate + ATP = (6R)-10-formyltetrahydrofolate + ADP + phosphate. Its pathway is one-carbon metabolism; tetrahydrofolate interconversion. The sequence is that of Formate--tetrahydrofolate ligase from Thermoplasma volcanium (strain ATCC 51530 / DSM 4299 / JCM 9571 / NBRC 15438 / GSS1).